Reading from the N-terminus, the 328-residue chain is Tetraacyldisaccharide 4'-kinase (328 aa).

55 to 62 is a binding site for ATP; it reads TAGGNGKT.

It belongs to the LpxK family.

It catalyses the reaction a lipid A disaccharide + ATP = a lipid IVA + ADP + H(+). The protein operates within glycolipid biosynthesis; lipid IV(A) biosynthesis; lipid IV(A) from (3R)-3-hydroxytetradecanoyl-[acyl-carrier-protein] and UDP-N-acetyl-alpha-D-glucosamine: step 6/6. Transfers the gamma-phosphate of ATP to the 4'-position of a tetraacyldisaccharide 1-phosphate intermediate (termed DS-1-P) to form tetraacyldisaccharide 1,4'-bis-phosphate (lipid IVA). The chain is Tetraacyldisaccharide 4'-kinase from Escherichia coli (strain 55989 / EAEC).